A 124-amino-acid chain; its full sequence is V-type proton ATPase subunit F (124 aa).

Belongs to the V-ATPase F subunit family. V-ATPase is a heteromultimeric enzyme composed of a peripheral catalytic V1 complex (components A to H) attached to an integral membrane V0 proton pore complex (components: a, c, c', c'', d, e, f and VOA1).

The protein resides in the vacuole membrane. Its function is as follows. Subunit of the V1 complex of vacuolar(H+)-ATPase (V-ATPase), a multisubunit enzyme composed of a peripheral complex (V1) that hydrolyzes ATP and a membrane integral complex (V0) that translocates protons. V-ATPase is responsible for acidifying and maintaining the pH of intracellular compartments. In Neosartorya fischeri (strain ATCC 1020 / DSM 3700 / CBS 544.65 / FGSC A1164 / JCM 1740 / NRRL 181 / WB 181) (Aspergillus fischerianus), this protein is V-type proton ATPase subunit F (vma7).